An 87-amino-acid polypeptide reads, in one-letter code: MVKNSVISIIFQEEKRGSVEFQVFNFTNKIRRLTSHLELHKKDYLSQRGLKKILGKRQRLLAYLAKKNRVRYKELINQLDIRETKTR.

It belongs to the universal ribosomal protein uS15 family. Part of the 30S ribosomal subunit.

The protein localises to the plastid. It is found in the chloroplast. This Atropa belladonna (Belladonna) protein is Small ribosomal subunit protein uS15c (rps15).